A 773-amino-acid polypeptide reads, in one-letter code: Kelch domain-containing protein 7A (773 aa).

Residues 23–40 form a helical membrane-spanning segment; the sequence is VVLSAAALLLVTAAYKLY. The N-linked (GlcNAc...) asparagine glycan is linked to Asn61. 2 disordered regions span residues 64 to 99 and 114 to 207; these read EALG…LDYS and SEEA…APNG. At Ser89 the chain carries Phosphoserine. Basic and acidic residues predominate over residues 114-126; the sequence is SEEATRKGSDESQ. Asn256 is a glycosylation site (N-linked (GlcNAc...) asparagine). Residues 296-355 form a disordered region; that stretch reads KADSRPVPCPAALADAPSPGPGPEPLVTGAASRDEAANTAGGGASEAASPQPVASPSAPG. 5 Kelch repeats span residues 323-370, 488-534, 537-585, 586-628, and 631-673; these read TGAA…ENPE, KRLV…LCTL, YLFV…ALEG, HLYA…ATVC, and EIFV…AVNG. The segment covering 340 to 354 has biased composition (low complexity); sequence SEAASPQPVASPSAP. Residue Ser361 is modified to Phosphoserine.

It is found in the membrane. The protein is Kelch domain-containing protein 7A (Klhdc7a) of Mus musculus (Mouse).